A 229-amino-acid polypeptide reads, in one-letter code: Protein ras-2 (229 aa).

15-22 (GDGGVGKT) provides a ligand contact to GTP. The Effector region motif lies at 37–45 (YDPTIEDSY). 62–66 (DTAGQ) serves as a coordination point for GTP. The segment at 109-132 (KESTSSPSAYPGSSPLAATNPSAP) is disordered. The span at 111–126 (STSSPSAYPGSSPLAA) shows a compositional bias: low complexity. Residue 140 to 143 (NKSD) coordinates GTP. The segment at 188 to 229 (LRKQRQQGQSTPRALPPSGNSKSEKYSGTEKPKRPRGKCLII) is disordered. Residues 209–219 (KSEKYSGTEKP) are compositionally biased toward basic and acidic residues. Over residues 220-229 (KRPRGKCLII) the composition is skewed to basic residues. Cysteine 226 carries the cysteine methyl ester modification. A lipid anchor (S-farnesyl cysteine) is attached at cysteine 226. Residues 227 to 229 (LII) constitute a propeptide, removed in mature form.

It belongs to the small GTPase superfamily. Ras family.

Its subcellular location is the cell membrane. The enzyme catalyses GTP + H2O = GDP + phosphate + H(+). Its function is as follows. Ras proteins bind GDP/GTP and possess intrinsic GTPase activity. This chain is Protein ras-2 (ras-2), found in Neurospora crassa (strain ATCC 24698 / 74-OR23-1A / CBS 708.71 / DSM 1257 / FGSC 987).